Here is a 174-residue protein sequence, read N- to C-terminus: NADH-quinone oxidoreductase subunit I (174 aa).

4Fe-4S ferredoxin-type domains lie at 61–91 (LTVKKDGSLRCTACMLCATNCPAECIKITAA) and 103–132 (ISYEIDILRCVFCGFCEEACPVDAIRLGPE). Positions 71, 74, 77, 81, 112, 115, 118, and 122 each coordinate [4Fe-4S] cluster.

The protein belongs to the complex I 23 kDa subunit family. NDH-1 is composed of 14 different subunits. Subunits NuoA, H, J, K, L, M, N constitute the membrane sector of the complex. Requires [4Fe-4S] cluster as cofactor.

It localises to the cell inner membrane. It carries out the reaction a quinone + NADH + 5 H(+)(in) = a quinol + NAD(+) + 4 H(+)(out). NDH-1 shuttles electrons from NADH, via FMN and iron-sulfur (Fe-S) centers, to quinones in the respiratory chain. The immediate electron acceptor for the enzyme in this species is believed to be ubiquinone. Couples the redox reaction to proton translocation (for every two electrons transferred, four hydrogen ions are translocated across the cytoplasmic membrane), and thus conserves the redox energy in a proton gradient. In Bdellovibrio bacteriovorus (strain ATCC 15356 / DSM 50701 / NCIMB 9529 / HD100), this protein is NADH-quinone oxidoreductase subunit I.